We begin with the raw amino-acid sequence, 251 residues long: Imidazole glycerol phosphate synthase subunit HisF (251 aa).

Residues aspartate 11 and aspartate 130 contribute to the active site.

The protein belongs to the HisA/HisF family. Heterodimer of HisH and HisF.

The protein resides in the cytoplasm. It catalyses the reaction 5-[(5-phospho-1-deoxy-D-ribulos-1-ylimino)methylamino]-1-(5-phospho-beta-D-ribosyl)imidazole-4-carboxamide + L-glutamine = D-erythro-1-(imidazol-4-yl)glycerol 3-phosphate + 5-amino-1-(5-phospho-beta-D-ribosyl)imidazole-4-carboxamide + L-glutamate + H(+). It participates in amino-acid biosynthesis; L-histidine biosynthesis; L-histidine from 5-phospho-alpha-D-ribose 1-diphosphate: step 5/9. Its function is as follows. IGPS catalyzes the conversion of PRFAR and glutamine to IGP, AICAR and glutamate. The HisF subunit catalyzes the cyclization activity that produces IGP and AICAR from PRFAR using the ammonia provided by the HisH subunit. In Thiobacillus denitrificans (strain ATCC 25259 / T1), this protein is Imidazole glycerol phosphate synthase subunit HisF.